A 1205-amino-acid polypeptide reads, in one-letter code: Nitric oxide synthase 3 (1205 aa).

The segment at 1 to 73 (MGNLKSVGQE…PPEGPKFPRV (73 aa)) is disordered. Gly-2 carries N-myristoyl glycine lipidation. 2 S-palmitoyl cysteine lipidation sites follow: Cys-15 and Cys-26. The span at 15-27 (CGLGLGLGLGLCG) shows a compositional bias: gly residues. Positions 33–47 (TPAPEPSRAPAPATP) are enriched in pro residues. The Zn(2+) site is built by Cys-96 and Cys-101. Residues 100–488 (RCLGSLVLPR…PDPWKGSAAK (389 aa)) form an interaction with NOSIP region. Residue Ser-104 participates in (6R)-L-erythro-5,6,7,8-tetrahydrobiopterin binding. Ser-116 bears the Phosphoserine; by CDK5 mark. Cys-186 serves as a coordination point for heme b. Gln-249, Trp-358, Tyr-359, Glu-363, and Asn-368 together coordinate L-arginine. (6R)-L-erythro-5,6,7,8-tetrahydrobiopterin is bound by residues Ala-448, Trp-449, and Phe-462. Position 477 (Tyr-477) interacts with heme b. Residues 492–512 (IARKKTFKEVANAVKISASLM) form a calmodulin-binding region. Thr-497 carries the post-translational modification Phosphothreonine; by AMPK. The region spanning 522-705 (ASILYASETV…AFRGWAQAAF (184 aa)) is the Flavodoxin-like domain. 6 residues coordinate FMN: Ser-528, Glu-529, Thr-530, Arg-532, Ser-574, and Thr-575. 3 positions are modified to phosphoserine: Ser-617, Ser-635, and Ser-640. Residues Ser-656, Cys-663, Glu-689, and Gln-693 each coordinate FMN. Residues 758–1004 (RKMFQATVLS…IRAAPSFRLP (247 aa)) form the FAD-binding FR-type domain. Residue Arg-778 coordinates NADP(+). His-800 contributes to the FAD binding site. A disordered region spans residues 820–848 (EDPTPPTESVGVEQLEKGSPGGPPPSWVR). Residue Ser-838 is modified to Phosphoserine. 9 residues coordinate FAD: Arg-940, Tyr-942, Ser-943, Thr-958, Ala-960, Tyr-964, Val-977, Cys-978, and Ser-979. Positions 1018, 1051, 1080, 1081, 1087, 1089, and 1091 each coordinate NADP(+). Thr-1177 carries the phosphothreonine modification. Ser-1179 carries the post-translational modification Phosphoserine; by AMPK. Ser-1181 is subject to Phosphoserine.

Belongs to the NOS family. Homodimer. Interacts with NOSIP and NOSTRIN. Interacts with HSP90AB1. Forms a complex with ASL, ASS1 and SLC7A1; the complex regulates cell-autonomous L-arginine synthesis and citrulline recycling while channeling extracellular L-arginine to nitric oxide synthesis pathway. Heme b serves as cofactor. Requires FAD as cofactor. It depends on FMN as a cofactor. (6R)-L-erythro-5,6,7,8-tetrahydrobiopterin is required as a cofactor. Phosphorylation by AMPK at Ser-1179 in the presence of Ca(2+)-calmodulin (CaM) activates activity. In absence of Ca(2+)-calmodulin, AMPK also phosphorylates Thr-497, resulting in inhibition of activity. Phosphorylation of Ser-116 by CDK5 reduces activity.

The protein resides in the membrane. Its subcellular location is the caveola. It localises to the cytoplasm. The protein localises to the cytoskeleton. It is found in the golgi apparatus. The protein resides in the cell membrane. The enzyme catalyses 2 L-arginine + 3 NADPH + 4 O2 + H(+) = 2 L-citrulline + 2 nitric oxide + 3 NADP(+) + 4 H2O. Stimulated by calcium/calmodulin. Inhibited by NOSIP and NOSTRIN. Produces nitric oxide (NO) which is implicated in vascular smooth muscle relaxation through a cGMP-mediated signal transduction pathway. NO mediates vascular endothelial growth factor (VEGF)-induced angiogenesis in coronary vessels and promotes blood clotting through the activation of platelets. In Sus scrofa (Pig), this protein is Nitric oxide synthase 3 (NOS3).